A 391-amino-acid chain; its full sequence is Lysophosphatidylinositol acyltransferase 10 (391 aa).

5 consecutive transmembrane segments (helical) span residues 10–30, 52–72, 97–119, 323–343, and 347–367; these read LLGW…NYII, AISY…GVRI, WMYM…KISL, LTSL…IFFV, and QLGF…YGGI.

This sequence belongs to the 1-acyl-sn-glycerol-3-phosphate acyltransferase family. As to expression, expressed in seam cells, vulval epithelial cells and the major epithelial syncytium hyp7, and in several head neurons including AIY interneurons.

The protein resides in the endoplasmic reticulum membrane. The catalysed reaction is a 2-acyl-sn-glycero-3-phospho-D-myo-inositol + an acyl-CoA = a 1,2-diacyl-sn-glycero-3-phospho-(1D-myo-inositol) + CoA. It catalyses the reaction a 2-acyl-sn-glycero-3-phospho-D-myo-inositol + octadecanoyl-CoA = 1-octadecanoyl-2-acyl-sn-glycero-3-phospho-1D-myo-inositol + CoA. It participates in phospholipid metabolism; phosphatidylinositol metabolism. Functionally, acyltransferase required for the fatty acid remodeling of phosphatidylinositol (1,2-diacyl-sn-glycero-3-phosphoinositol or PI). Mediates the conversion of lysophosphatidylinositol (2-acylglycerophosphatidylinositol or LPI) into PI (LPIAT activity). Has preference for saturated and mono-unsaturated fatty acids as acyl donors and sn-2-acyl lysoPI (2-acyl-sn-glycero-3-phospho-D-myo-inositol) as acyl acceptor. Contributes to the asymmetric cell division of epithelial cells. Asymmetric cell division is the fundamental mechanism by which multicellular organisms generate cell diversity. The protein is Lysophosphatidylinositol acyltransferase 10 of Caenorhabditis elegans.